The sequence spans 206 residues: Pyridoxine/pyridoxamine 5'-phosphate oxidase (206 aa).

FMN contacts are provided by residues R54 to K59, Y69 to T70, R75, K76, and Q98. K59 lines the substrate pocket. The substrate site is built by Y116, R120, and S124. Residues Q133–S134 and W178 each bind FMN. R184–H186 contacts substrate. FMN is bound at residue R188.

This sequence belongs to the pyridoxamine 5'-phosphate oxidase family. Homodimer. The cofactor is FMN.

It carries out the reaction pyridoxamine 5'-phosphate + O2 + H2O = pyridoxal 5'-phosphate + H2O2 + NH4(+). The catalysed reaction is pyridoxine 5'-phosphate + O2 = pyridoxal 5'-phosphate + H2O2. The protein operates within cofactor metabolism; pyridoxal 5'-phosphate salvage; pyridoxal 5'-phosphate from pyridoxamine 5'-phosphate: step 1/1. It functions in the pathway cofactor metabolism; pyridoxal 5'-phosphate salvage; pyridoxal 5'-phosphate from pyridoxine 5'-phosphate: step 1/1. Catalyzes the oxidation of either pyridoxine 5'-phosphate (PNP) or pyridoxamine 5'-phosphate (PMP) into pyridoxal 5'-phosphate (PLP). The sequence is that of Pyridoxine/pyridoxamine 5'-phosphate oxidase from Anaplasma phagocytophilum (strain HZ).